A 432-amino-acid chain; its full sequence is FMRFamide peptide receptor frpr-18 (432 aa).

Over 1-8 (MESQQLMA) the chain is Extracellular. A helical membrane pass occupies residues 9–29 (CAILVIVLVGIFGNSLSFILF). Topologically, residues 30–42 (SRPHMRSSSVNVL) are cytoplasmic. Residues 43–63 (LCALSFFDFSLLTLSIPIFVI) traverse the membrane as a helical segment. Residues 64–84 (PNLDLWANDLSLSTYMAYILK) are Extracellular-facing. The helical transmembrane segment at 85-105 (LIYPINLMMQTCSVYIMVMIT) threads the bilayer. Residues 106 to 128 (LERWVAVCRPLQVRVWCTPRKSR) lie on the Cytoplasmic side of the membrane. The chain crosses the membrane as a helical span at residues 129–149 (NAILVIIVSAFLYNFVRFFEY). The Extracellular segment spans residues 150-176 (RFVVTESGALYEKWLRDPGKHRWYYVG). Residues 177–197 (YYTILYIVTHFLVPFSVMAFA) form a helical membrane-spanning segment. Residues 198 to 225 (NGHVIVAMCKLSKTRQMLTRQQQREQST) are Cytoplasmic-facing. Residues 226–246 (TVMLLIVTFVFAICNTLPFLL) traverse the membrane as a helical segment. Topologically, residues 247–271 (NVSESIFPTLFQDESTRGLAYWLND) are extracellular. Residues 272 to 292 (LSNLLVVLNSGTTFIIYFTFS) form a helical membrane-spanning segment. The Cytoplasmic portion of the chain corresponds to 293–432 (EKYRQTLVFI…GEPDSPCQPC (140 aa)). Disordered regions lie at residues 328-349 (ISSE…SSRS) and 388-411 (KLPS…GMPE).

Belongs to the G-protein coupled receptor 1 family. In terms of tissue distribution, expressed in a subset of neurons in the head, midbody, and tail, including AIY, ASI, BAG, URA, CAN, I6, PVQ, DVA, RIM, and VC, and in the anal sphincter and intestinal muscles. Expression from the ASI neurons is involved in promoting arousal.

The protein localises to the cell membrane. Functionally, G-protein coupled receptor for flp-2 neuropeptides. May act through the G(q) alpha type of G proteins. Involved in mediating arousal from the sleep-like state called lethargus, which occurs during molting between larval and adult stages, in part by regulating touch sensitivity, and working in concert with neuropeptide pdf-1. The polypeptide is FMRFamide peptide receptor frpr-18 (Caenorhabditis elegans).